We begin with the raw amino-acid sequence, 259 residues long: UPF0758 protein Bphyt_3148 (259 aa).

The 123-residue stretch at 137–259 folds into the MPN domain; that stretch reads LLNSPEAVEN…VYSFARAGWP (123 aa). Zn(2+) contacts are provided by His208, His210, and Asp221. Residues 208 to 221 carry the JAMM motif motif; sequence HNHPSGAVQPSASD.

The protein belongs to the UPF0758 family.

This chain is UPF0758 protein Bphyt_3148, found in Paraburkholderia phytofirmans (strain DSM 17436 / LMG 22146 / PsJN) (Burkholderia phytofirmans).